The sequence spans 425 residues: Trigger factor (425 aa).

In terms of domain architecture, PPIase FKBP-type spans 158–231 (GDLVRVNMEV…VEEVYKRTLP (74 aa)).

It belongs to the FKBP-type PPIase family. Tig subfamily.

The protein localises to the cytoplasm. It carries out the reaction [protein]-peptidylproline (omega=180) = [protein]-peptidylproline (omega=0). Its function is as follows. Involved in protein export. Acts as a chaperone by maintaining the newly synthesized protein in an open conformation. Functions as a peptidyl-prolyl cis-trans isomerase. The protein is Trigger factor of Thermotoga petrophila (strain ATCC BAA-488 / DSM 13995 / JCM 10881 / RKU-1).